The chain runs to 843 residues: Protein piwi (843 aa).

The Nuclear localization signal motif lies at 1-12; it reads MADDQGRGRRRP. A disordered region spans residues 1–76; it reads MADDQGRGRR…TERKPWGDQY (76 aa). The interaction with CBX5 and papi stretch occupies residues 1-257; that stretch reads MADDQGRGRR…ILLGTEITHK (257 aa). A symmetric dimethylarginine mark is found at arginine 7, arginine 9, arginine 10, and arginine 11. Positions 41 to 72 are enriched in basic and acidic residues; it reads PRADPRIEASRERRALEEAPRREGGPTERKPW. Residues 263-372 enclose the PAZ domain; it reads TIYDIMRRCS…LIPELCRVTG (110 aa). A Piwi domain is found at 538 to 829; it reads LILCLVPNDN…LATLVGTNLH (292 aa). Glutamine 589 contacts Mg(2+). Active-site residues include aspartate 614 and aspartate 685. Position 843 (leucine 843) interacts with Mg(2+).

It belongs to the argonaute family. Piwi subfamily. In the ovaries, part of a complex composed of at least Panx, nxf2, piwi and Nxt1. The complex is knowns as Panx-induced co-transcriptional silencing (PICTS) complex, Panx-nxf2-dependent TAP/p15 silencing (Pandas complex), SFiNX (silencing factor interacting nuclear export variant) or piwi-Panx-nxf2-p15 (PPNP) complex. Interacts with vas; this interaction is RNA-independent. Interacts with Dcr-1 and Fmr1; these interactions occur in polar granules. Interacts (via N-terminal region) with CBX5 (via chromoshadow domain). Forms a complex with Hsp83 and Hop; probably Hop mediates the interaction between piwi and Hsp83. Forms a complex with Yb body components armi and fs(1)Yb; this interaction is required for proper piRNA loading and nuclear localization of piwi. Interaction of Piwi and fs(1)Yb is likely to occur via armi. Interacts (via the N-terminal region when unmethylated or symmetrically methylated at Arg-10) with papi (via Tudor domain). Interacts with vret. Interacts with Panx. Interacts with arx. Interacts with Tudor-SN. Interacts with Nup358 (via N-terminus). Associates with the nuclear pore complex via interaction with Elys. Interacts with thoc5; the interaction might be partly RNA-mediated. Interacts with xmas-2. Symmetrically dimethylated, most likely by csul. Methylation at Arg-10 enhances binding to papi whereas methylation at Arg-7, Arg-9 or Arg-11 reduces binding affinity to papi. In terms of processing, phosphorylated on serine and tyrosine residues in an Hsp83-dependent manner. Expressed in ovaries (at protein level). Expressed somatically in ovariole terminal filament cells, epithelial sheath cells, cap cells and follicle cells (at protein level). Expressed in nurse cells and oocytes in developing egg chambers (at protein level). In embryos, accumulates in pole cells (at protein level). In larval and adult testis, expressed in a germinal proliferative center at the apical tip containing somatic hub cells and mitotically dividing germ stem cells (at protein level).

It is found in the cytoplasm. It localises to the nucleus. The protein resides in the nucleoplasm. Its subcellular location is the chromosome. Acts via the piwi-interacting RNA (piRNA) metabolic process, which mediates the repression of transposable elements during meiosis by forming complexes composed of piRNAs and Piwi proteins and governs the methylation and subsequent repression of transposons. Directly binds piRNAs, a class of 24 to 30 nucleotide RNAs that are generated by a Dicer-independent mechanism and are primarily derived from transposons and other repeated sequence elements. In ovarian somatic cells, mediates silencing of transposable elements at the transcriptional level in a mael-dependent manner. Involved in silencing of long terminal repeat (LTR) retrotransposons in male germline. In testis, regulates spermatogenesis together with Tudor-SN. In germ cells, mediates silencing at both transcriptional and post-transcriptional levels and is involved in the maintenance of populations of primary and secondary piRNAs. Piwi-mediated transcriptional silencing is accompanied by the formation of His3 trimethylated on 'Lys-10' (H3K9me3) associated euchromatin and heterochromatin. In ovary, associates predominantly with antisense piRNAs that contain uridine at their 5' end. Association with sense piRNAs is also observed but to a lesser extent. Mediates a somatic signaling mechanism required for the maintenance of germline stem cells to produce and maintain a daughter germline stem cell. It is not essential for the further differentiation of the committed daughter cell. Acts cell autonomously to promote germline stem cell division. Its role in stem cell maintenance does not seem to require nuclear localization. Required maternally for the posterior localization of osk and vas and for pole cell formation during oogenesis and early embryogenesis. Together with Hop and Hsp83, mediates canalization, also known as developmental robustness, likely via epigenetic silencing of existing genetic variants and suppression of transposon-induced new genetic variation. Shows RNA cleavage activity, although is not required for any of its known functions. In the ovaries, forms a complex with nxf2, Panx and Nxt1 which acts as effectors of cotranscriptional transposon silencing. In Drosophila melanogaster (Fruit fly), this protein is Protein piwi.